The following is a 111-amino-acid chain: uncharacterized protein (111 aa).

This is an uncharacterized protein from Schizosaccharomyces pombe (strain 972 / ATCC 24843) (Fission yeast).